Reading from the N-terminus, the 264-residue chain is Occludin/ELL domain-containing protein 1 (264 aa).

Residues 1–10 (MHNPDGSASP) show a composition bias toward polar residues. The interval 1–112 (MHNPDGSASP…QPGPHKAKTK (112 aa)) is disordered. The segment covering 96–105 (PRPPCQPQPG) has biased composition (pro residues). An OCEL domain is found at 147-257 (PDYELKYPPV…QIQKFDDQGD (111 aa)).

The protein belongs to the ELL/occludin family.

The polypeptide is Occludin/ELL domain-containing protein 1 (OCEL1) (Homo sapiens (Human)).